We begin with the raw amino-acid sequence, 442 residues long: Tyrosine-protein kinase transforming protein RYK (442 aa).

Residues 45–316 (LSLGKVLGEG…QLKVHLEKLL (272 aa)) form the Protein kinase domain. Residues 51–59 (LGEGEFGSV) and K77 each bind ATP. D181 acts as the Proton acceptor in catalysis. Residue Y212 is modified to Phosphotyrosine; by autocatalysis.

The protein belongs to the protein kinase superfamily. Tyr protein kinase family. AXL/UFO subfamily.

The protein localises to the host cell membrane. The catalysed reaction is L-tyrosyl-[protein] + ATP = O-phospho-L-tyrosyl-[protein] + ADP + H(+). The protein is Tyrosine-protein kinase transforming protein RYK (V-RYK) of Avian retrovirus RPL30.